A 345-amino-acid chain; its full sequence is Leucine-rich repeat-containing protein 69 (345 aa).

10 LRR repeats span residues 13-34 (KAKT…VGCL), 36-58 (SLTE…SALC), 59-80 (RLRV…IKYL), 82-103 (CLER…ALDG), 106-127 (NLLF…IYKL), 129-151 (SLET…CFLQ), 152-173 (NLQE…LSYL), 175-196 (NLKE…ICKL), 198-219 (KLKI…MHRV), and 220-241 (PLTE…FARQ).

It belongs to the LRRC69 family.

The polypeptide is Leucine-rich repeat-containing protein 69 (lrrc69) (Xenopus laevis (African clawed frog)).